The primary structure comprises 423 residues: Imidazolonepropionase (423 aa).

Positions 78 and 80 each coordinate Fe(3+). Zn(2+)-binding residues include His78 and His80. Residues Arg87, Tyr150, and His183 each contribute to the 4-imidazolone-5-propanoate site. Position 150 (Tyr150) interacts with N-formimidoyl-L-glutamate. Position 247 (His247) interacts with Fe(3+). His247 contacts Zn(2+). 4-imidazolone-5-propanoate is bound at residue Glu250. Asp322 provides a ligand contact to Fe(3+). Asp322 contributes to the Zn(2+) binding site. N-formimidoyl-L-glutamate is bound by residues Asn324 and Gly326. Position 327 (Ser327) interacts with 4-imidazolone-5-propanoate.

This sequence belongs to the metallo-dependent hydrolases superfamily. HutI family. The cofactor is Zn(2+). Fe(3+) serves as cofactor.

It is found in the cytoplasm. The enzyme catalyses 4-imidazolone-5-propanoate + H2O = N-formimidoyl-L-glutamate. It functions in the pathway amino-acid degradation; L-histidine degradation into L-glutamate; N-formimidoyl-L-glutamate from L-histidine: step 3/3. Its function is as follows. Catalyzes the hydrolytic cleavage of the carbon-nitrogen bond in imidazolone-5-propanoate to yield N-formimidoyl-L-glutamate. It is the third step in the universal histidine degradation pathway. This Bacillus cereus (strain B4264) protein is Imidazolonepropionase.